A 32-amino-acid chain; its full sequence is Cytochrome b6-f complex subunit 7 (32 aa).

The chain crosses the membrane as a helical span at residues 5–25 (IFGTAAIFWVLIPAGLLGGAL).

This sequence belongs to the PetM family. As to quaternary structure, the 4 large subunits of the cytochrome b6-f complex are cytochrome b6, subunit IV (17 kDa polypeptide, PetD), cytochrome f and the Rieske protein, while the 4 small subunits are PetG, PetL, PetM and PetN. The complex functions as a dimer.

It is found in the cellular thylakoid membrane. Its function is as follows. Component of the cytochrome b6-f complex, which mediates electron transfer between photosystem II (PSII) and photosystem I (PSI), cyclic electron flow around PSI, and state transitions. The protein is Cytochrome b6-f complex subunit 7 of Prochlorococcus marinus (strain SARG / CCMP1375 / SS120).